The following is a 78-amino-acid chain: D-alanyl carrier protein (78 aa).

A Carrier domain is found at 1–78 (MAFRENVLEI…MIITQLEALK (78 aa)). The residue at position 36 (Ser36) is an O-(pantetheine 4'-phosphoryl)serine.

Belongs to the DltC family. Post-translationally, 4'-phosphopantetheine is transferred from CoA to a specific serine of apo-DCP.

It is found in the cytoplasm. The protein operates within cell wall biogenesis; lipoteichoic acid biosynthesis. Its function is as follows. Carrier protein involved in the D-alanylation of lipoteichoic acid (LTA). The loading of thioester-linked D-alanine onto DltC is catalyzed by D-alanine--D-alanyl carrier protein ligase DltA. The DltC-carried D-alanyl group is further transferred to cell membrane phosphatidylglycerol (PG) by forming an ester bond, probably catalyzed by DltD. D-alanylation of LTA plays an important role in modulating the properties of the cell wall in Gram-positive bacteria, influencing the net charge of the cell wall. The chain is D-alanyl carrier protein from Listeria monocytogenes serotype 4a (strain HCC23).